We begin with the raw amino-acid sequence, 279 residues long: Very long chain fatty acid elongase 1 (279 aa).

Met1 carries the post-translational modification N-acetylmethionine. 7 helical membrane-spanning segments follow: residues 23 to 43, 61 to 81, 110 to 130, 137 to 154, 176 to 196, 201 to 221, and 231 to 251; these read PLMG…YFVL, FMIV…YEFL, VAWL…IFIL, VTFL…SWWW, VIMY…PYLW, MTAI…QYYF, and VIIH…SNFW. Positions 275–279 match the Di-lysine motif motif; that stretch reads KVKAN.

It belongs to the ELO family. ELOVL1 subfamily. In terms of assembly, interacts with LASS2 and HSD17B12. Interacts with TECR. Ubiquitous.

It localises to the endoplasmic reticulum membrane. The enzyme catalyses a very-long-chain acyl-CoA + malonyl-CoA + H(+) = a very-long-chain 3-oxoacyl-CoA + CO2 + CoA. It catalyses the reaction eicosanoyl-CoA + malonyl-CoA + H(+) = 3-oxodocosanoyl-CoA + CO2 + CoA. It carries out the reaction (11Z)-eicosenoyl-CoA + malonyl-CoA + H(+) = 3-oxo-(13Z)-docosenoyl-CoA + CO2 + CoA. The catalysed reaction is docosanoyl-CoA + malonyl-CoA + H(+) = 3-oxotetracosanoyl-CoA + CO2 + CoA. The enzyme catalyses (13Z)-docosenoyl-CoA + malonyl-CoA + H(+) = 3-oxo-(15Z)-tetracosenoyl-CoA + CO2 + CoA. It catalyses the reaction tetracosanoyl-CoA + malonyl-CoA + H(+) = 3-oxohexacosanoyl-CoA + CO2 + CoA. It carries out the reaction hexacosanoyl-CoA + malonyl-CoA + H(+) = 3-oxooctacosanyol-CoA + CO2 + CoA. The catalysed reaction is octadecanoyl-CoA + malonyl-CoA + H(+) = 3-oxoeicosanoyl-CoA + CO2 + CoA. It functions in the pathway lipid metabolism; fatty acid biosynthesis. Catalyzes the first and rate-limiting reaction of the four reactions that constitute the long-chain fatty acids elongation cycle. This endoplasmic reticulum-bound enzymatic process allows the addition of 2 carbons to the chain of long- and very long-chain fatty acids (VLCFAs) per cycle. Condensing enzyme that exhibits activity toward saturated and monounsaturated acyl-CoA substrates, with the highest activity towards C22:0 acyl-CoA. May participate in the production of both saturated and monounsaturated VLCFAs of different chain lengths that are involved in multiple biological processes as precursors of membrane lipids and lipid mediators. Important for saturated C24:0 and monounsaturated C24:1 sphingolipid synthesis. Indirectly inhibits RPE65 via production of VLCFAs. The chain is Very long chain fatty acid elongase 1 from Homo sapiens (Human).